A 216-amino-acid chain; its full sequence is MDFPRFLLSAYLLLLSFAQCQHYYLLRPIPSDTLPLLELKEDPDPIYDPREKDLNETELRSALGDFDSRFLSVGPPQDRYAGNEDLDEQELQLNLAGMMPKDIKNLDFDAPWGKKRKASKKLKRRLQMWLWSYSFCPVLYAWNDLGSRFWPRFVRAGSCYTKRSCSVPEGMVCKPAKSTHITLLRWRCVARRGALKCAWIPVQYPIITECKCSCAN.

Residues 1-18 (MDFPRFLLSAYLLLLSFA) form the signal peptide. The N-linked (GlcNAc...) asparagine glycan is linked to N55.

The protein belongs to the noggin family. As to quaternary structure, homodimer; disulfide-linked.

It localises to the secreted. Its function is as follows. Inhibitor of bone morphogenetic proteins (BMP) signaling. May play an important role in the dorsoventral patterning of the embryo. In Danio rerio (Zebrafish), this protein is Noggin-1 (nog1).